Reading from the N-terminus, the 108-residue chain is uncharacterized protein (108 aa).

Cystine bridges form between cysteine 44-cysteine 82, cysteine 60-cysteine 78, and cysteine 63-cysteine 91.

It belongs to the arthropod CHH/MIH/GIH/VIH hormone family.

This is an uncharacterized protein from Caenorhabditis elegans.